The primary structure comprises 194 residues: dCTP deaminase, dUMP-forming (194 aa).

DCTP contacts are provided by residues 104-109, Asp122, 130-132, Gln151, Tyr165, Lys172, and Gln176; these read RSSLGR and TLE. The active-site Proton donor/acceptor is Glu132.

The protein belongs to the dCTP deaminase family. Homotrimer.

It carries out the reaction dCTP + 2 H2O = dUMP + NH4(+) + diphosphate. It functions in the pathway pyrimidine metabolism; dUMP biosynthesis; dUMP from dCTP: step 1/1. In terms of biological role, bifunctional enzyme that catalyzes both the deamination of dCTP to dUTP and the hydrolysis of dUTP to dUMP without releasing the toxic dUTP intermediate. This chain is dCTP deaminase, dUMP-forming, found in Dictyoglomus turgidum (strain DSM 6724 / Z-1310).